A 212-amino-acid polypeptide reads, in one-letter code: Uridine kinase (212 aa).

13 to 20 lines the ATP pocket; that stretch reads GASASGKS.

The protein belongs to the uridine kinase family.

It localises to the cytoplasm. The enzyme catalyses uridine + ATP = UMP + ADP + H(+). The catalysed reaction is cytidine + ATP = CMP + ADP + H(+). It functions in the pathway pyrimidine metabolism; CTP biosynthesis via salvage pathway; CTP from cytidine: step 1/3. It participates in pyrimidine metabolism; UMP biosynthesis via salvage pathway; UMP from uridine: step 1/1. This is Uridine kinase from Shewanella putrefaciens (strain CN-32 / ATCC BAA-453).